The following is a 168-amino-acid chain: Photosystem I assembly protein Ycf3 (168 aa).

TPR repeat units follow at residues 35 to 68 (AFTY…EIDP), 72 to 105 (SYIL…NPFL), and 120 to 153 (GEQA…TPGN).

Belongs to the Ycf3 family.

It localises to the plastid. Its subcellular location is the chloroplast thylakoid membrane. Essential for the assembly of the photosystem I (PSI) complex. May act as a chaperone-like factor to guide the assembly of the PSI subunits. The polypeptide is Photosystem I assembly protein Ycf3 (Phalaenopsis aphrodite subsp. formosana (Moth orchid)).